Reading from the N-terminus, the 124-residue chain is Aspartate 1-decarboxylase (124 aa).

Ser-25 acts as the Schiff-base intermediate with substrate; via pyruvic acid in catalysis. Ser-25 bears the Pyruvic acid (Ser) mark. Residue Thr-57 participates in substrate binding. The active-site Proton donor is the Tyr-58. 71-73 contributes to the substrate binding site; the sequence is GAA.

It belongs to the PanD family. As to quaternary structure, heterooctamer of four alpha and four beta subunits. The cofactor is pyruvate. Is synthesized initially as an inactive proenzyme, which is activated by self-cleavage at a specific serine bond to produce a beta-subunit with a hydroxyl group at its C-terminus and an alpha-subunit with a pyruvoyl group at its N-terminus.

It localises to the cytoplasm. The catalysed reaction is L-aspartate + H(+) = beta-alanine + CO2. The protein operates within cofactor biosynthesis; (R)-pantothenate biosynthesis; beta-alanine from L-aspartate: step 1/1. In terms of biological role, catalyzes the pyruvoyl-dependent decarboxylation of aspartate to produce beta-alanine. This chain is Aspartate 1-decarboxylase, found in Bdellovibrio bacteriovorus (strain ATCC 15356 / DSM 50701 / NCIMB 9529 / HD100).